The sequence spans 270 residues: Glucosamine-6-phosphate deaminase (270 aa).

Catalysis depends on Asp72, which acts as the Proton acceptor; for enolization step. Asp141 functions as the For ring-opening step in the catalytic mechanism. The Proton acceptor; for ring-opening step role is filled by His143. Residue Glu148 is the For ring-opening step of the active site.

The protein belongs to the glucosamine/galactosamine-6-phosphate isomerase family. NagB subfamily. Homohexamer.

It catalyses the reaction alpha-D-glucosamine 6-phosphate + H2O = beta-D-fructose 6-phosphate + NH4(+). It participates in amino-sugar metabolism; N-acetylneuraminate degradation; D-fructose 6-phosphate from N-acetylneuraminate: step 5/5. With respect to regulation, allosterically activated by N-acetylglucosamine 6-phosphate (GlcNAc6P). Functionally, catalyzes the reversible isomerization-deamination of glucosamine 6-phosphate (GlcN6P) to form fructose 6-phosphate (Fru6P) and ammonium ion. This is Glucosamine-6-phosphate deaminase from Haemophilus influenzae (strain 86-028NP).